Consider the following 233-residue polypeptide: Large ribosomal subunit protein eL6z (233 aa).

The interval 175 to 195 (EFFEAEKEEKKEIPQEKKEDQ) is disordered.

It belongs to the eukaryotic ribosomal protein eL6 family.

This Arabidopsis thaliana (Mouse-ear cress) protein is Large ribosomal subunit protein eL6z (RPL6A).